We begin with the raw amino-acid sequence, 961 residues long: Rho guanine nucleotide exchange factor 2 (961 aa).

The segment at 12 to 59 (GHLFTTISVSGMTMCYACNKSITAKEALICPTCNVTIHNRCKDTLANC) adopts a Phorbol-ester/DAG-type zinc-finger fold. Phosphoserine is present on residues S82, S95, S102, S106, S110, S124, S136, S145, S147, and S150. The interaction with DYNLT1 stretch occupies residues 104–134 (RQSLLGSRRGRSPLSLAKSVSTTNIAGHFND). One can recognise a DH domain in the interval 209-406 (KQQDVIYELI…KELLSNVDQD (198 aa)). K327 carries the post-translational modification N6-acetyllysine. Positions 446 to 545 (KLIHDGCLLW…WIRVIQQSVR (100 aa)) constitute a PH domain. Residues 561–588 (EAYLRRIKMELQQKDRALVELLQEKVGL) adopt a coiled-coil conformation. Phosphoserine occurs at positions 619 and 622. Position 653 is a phosphothreonine; by MAPK1 or MAPK3 (T653). The segment at 659–679 (LPVETDSGGNTSPGVTANGEA) is disordered. 4 positions are modified to phosphoserine: S665, S670, S685, and S756. Residues 742 to 761 (PEGPERREKLTRANSRDGEA) show a composition bias toward basic and acidic residues. The disordered stretch occupies residues 742-770 (PEGPERREKLTRANSRDGEAGRAGAAPVA). Residues 772 to 841 (EKQATELALL…RQLAALGHTE (70 aa)) adopt a coiled-coil conformation. S860 carries the post-translational modification Phosphoserine; by PAK1 and AURKA. The interval 867-961 (LYLSFTPPQP…RDGEPVASES (95 aa)) is disordered. Y868 is modified (phosphotyrosine). S870 bears the Phosphoserine; by PAK4 mark. Basic and acidic residues predominate over residues 894–913 (RPFEDRERQELGSPDERLQD). S906, S914, and S915 each carry phosphoserine. The segment covering 915 to 925 (SDPDTGSEEEG) has biased composition (acidic residues). Residue T919 is modified to Phosphothreonine. A phosphoserine mark is found at S921, S927, S928, and S931. S935 carries the phosphoserine; by CDK1 modification.

In terms of assembly, found in a complex composed at least of ARHGEF2, NOD2 and RIPK2. Interacts with RIPK2; the interaction mediates tyrosine phosphorylation of RIPK2 by Src kinase CSK. Interacts with RIPK1 and RIPK3. Interacts with YWHAZ/14-3-3 zeta; when phosphorylated at Ser-860. Interacts with the kinases PAK4, AURKA and MAPK1. Interacts with RHOA and RAC1. Interacts with NOD1. Interacts (via the N- terminal zinc finger) with CAPN6 (via domain II). Interacts with DYNLT1. In terms of processing, phosphorylation of Ser-860 by PAK1 induces binding to protein YWHAZ, promoting its relocation to microtubules and the inhibition of its activity. Phosphorylated by AURKA and CDK1 during mitosis, which negatively regulates its activity. Phosphorylation by MAPK1 or MAPK3 increases nucleotide exchange activity. Phosphorylation by PAK4 releases GEF-H1 from the microtubules. Phosphorylated on serine, threonine and tyrosine residues in a RIPK2-dependent manner.

The protein localises to the cytoplasm. The protein resides in the cytoskeleton. It localises to the cell junction. It is found in the tight junction. Its subcellular location is the golgi apparatus. The protein localises to the spindle. The protein resides in the cytoplasmic vesicle. In terms of biological role, activates Rho-GTPases by promoting the exchange of GDP for GTP. May be involved in epithelial barrier permeability, cell motility and polarization, dendritic spine morphology, antigen presentation, leukemic cell differentiation, cell cycle regulation, innate immune response, and cancer. Binds Rac-GTPases, but does not seem to promote nucleotide exchange activity toward Rac-GTPases. May stimulate instead the cortical activity of Rac. Inactive toward CDC42, TC10, or Ras-GTPases. Forms an intracellular sensing system along with NOD1 for the detection of microbial effectors during cell invasion by pathogens. Involved in innate immune signaling transduction pathway promoting cytokine IL6/interleukin-6 and TNF-alpha secretion in macrophage upon stimulation by bacterial peptidoglycans; acts as a signaling intermediate between NOD2 receptor and RIPK2 kinase. Contributes to the tyrosine phosphorylation of RIPK2 through Src tyrosine kinase leading to NF-kappaB activation by NOD2. Overexpression activates Rho-, but not Rac-GTPases, and increases paracellular permeability. Involved in neuronal progenitor cell division and differentiation. Involved in the migration of precerebellar neurons. In Sus scrofa (Pig), this protein is Rho guanine nucleotide exchange factor 2 (ARHGEF2).